A 630-amino-acid chain; its full sequence is Golgin subfamily A member 8K (630 aa).

Residues 1 to 76 (MAEETQHNKL…TSSATLKDLE (76 aa)) are disordered. Coiled-coil stretches lie at residues 86-148 (LDSR…LNTD) and 224-411 (LTQL…QQNQ). Residues 352 to 362 (KQEERIQEQHK) are compositionally biased toward basic and acidic residues. Disordered stretches follow at residues 352 to 379 (KQEE…EPNN) and 424 to 444 (GEGH…PMPS).

This sequence belongs to the GOLGA8 family.

The polypeptide is Golgin subfamily A member 8K (Homo sapiens (Human)).